Reading from the N-terminus, the 738-residue chain is Photosystem I P700 chlorophyll a apoprotein A2 (738 aa).

Transmembrane regions (helical) follow at residues L46–A69, L135–Q158, L175–I199, I273–Y291, L333–Y356, A372–I398, A420–H442, and F521–V539. The [4Fe-4S] cluster site is built by C563 and C572. 2 consecutive transmembrane segments (helical) span residues A579–W600 and L647–I669. Chlorophyll a is bound by residues H658, M666, and Y674. Phylloquinone is bound at residue W675. The helical transmembrane segment at V711–A731 threads the bilayer.

Belongs to the PsaA/PsaB family. In terms of assembly, the PsaA/B heterodimer binds the P700 chlorophyll special pair and subsequent electron acceptors. PSI consists of a core antenna complex that captures photons, and an electron transfer chain that converts photonic excitation into a charge separation. The cyanobacterial PSI reaction center is composed of one copy each of PsaA,B,C,D,E,F,I,J,K,L,M and X, and forms trimeric complexes. It depends on PSI electron transfer chain: 5 chlorophyll a, 1 chlorophyll a', 2 phylloquinones and 3 4Fe-4S clusters. PSI core antenna: 90 chlorophyll a, 22 carotenoids, 3 phospholipids and 1 galactolipid. P700 is a chlorophyll a/chlorophyll a' dimer, A0 is one or more chlorophyll a, A1 is one or both phylloquinones and FX is a shared 4Fe-4S iron-sulfur center. as a cofactor.

The protein localises to the cellular thylakoid membrane. It catalyses the reaction reduced [plastocyanin] + hnu + oxidized [2Fe-2S]-[ferredoxin] = oxidized [plastocyanin] + reduced [2Fe-2S]-[ferredoxin]. PsaA and PsaB bind P700, the primary electron donor of photosystem I (PSI), as well as the electron acceptors A0, A1 and FX. PSI is a plastocyanin/cytochrome c6-ferredoxin oxidoreductase, converting photonic excitation into a charge separation, which transfers an electron from the donor P700 chlorophyll pair to the spectroscopically characterized acceptors A0, A1, FX, FA and FB in turn. Oxidized P700 is reduced on the lumenal side of the thylakoid membrane by plastocyanin or cytochrome c6. The sequence is that of Photosystem I P700 chlorophyll a apoprotein A2 from Synechococcus sp. (strain WH7803).